Consider the following 138-residue polypeptide: Ribulose bisphosphate carboxylase small subunit (138 aa).

It belongs to the RuBisCO small chain family. Heterohexadecamer of 8 large and 8 small subunits.

The protein localises to the plastid. It is found in the chloroplast. RuBisCO catalyzes two reactions: the carboxylation of D-ribulose 1,5-bisphosphate, the primary event in carbon dioxide fixation, as well as the oxidative fragmentation of the pentose substrate in the photorespiration process. Both reactions occur simultaneously and in competition at the same active site. Although the small subunit is not catalytic it is essential for maximal activity. The chain is Ribulose bisphosphate carboxylase small subunit from Pyropia katadae (Red alga).